The following is a 407-amino-acid chain: GTPase Obg (407 aa).

An Obg domain is found at methionine 1–leucine 159. The disordered stretch occupies residues asparagine 127–arginine 150. The span at arginine 129–proline 143 shows a compositional bias: polar residues. In terms of domain architecture, OBG-type G spans alanine 160–glutamate 333. Residues glycine 166–serine 173, phenylalanine 191–valine 195, aspartate 213–glycine 216, asparagine 283–aspartate 286, and serine 314–isoleucine 316 each bind GTP. Residues serine 173 and threonine 193 each contribute to the Mg(2+) site. The interval valine 378–aspartate 407 is disordered. The segment covering glycine 385–proline 400 has biased composition (acidic residues).

Belongs to the TRAFAC class OBG-HflX-like GTPase superfamily. OBG GTPase family. Monomer. Requires Mg(2+) as cofactor.

The protein resides in the cytoplasm. An essential GTPase which binds GTP, GDP and possibly (p)ppGpp with moderate affinity, with high nucleotide exchange rates and a fairly low GTP hydrolysis rate. Plays a role in control of the cell cycle, stress response, ribosome biogenesis and in those bacteria that undergo differentiation, in morphogenesis control. The polypeptide is GTPase Obg (Pseudomonas entomophila (strain L48)).